Here is a 596-residue protein sequence, read N- to C-terminus: MGNEKLRKDLHRTIRTRDLNAVKHIILKKYTFSNKNALSTPLYLAVSNSDIDIVKFLLDNGADINKCKSPPLHKAINLGNVEMVKLLVDHGADIEKVYLGNSPLYLALCKRNTNITKYLLERGADPNTLFINYCDAIYNKIPIDIFKILIKYKVSLNIQNSHFKTPIYYAIKCTNYPLIKLLLENNASLTIPEGYNNHYLITAVKHNCDISILRLLIKYGVPVNEQDDLERTSLHYCVSAGKHDILKLLLDYDADPNITDSCLGTPLHYAVSRNDIIATTLLIEKGANVNIHNDTIDTVLNIAVGNRNKILINLLLMYGANTRLKSRNPLIHKALETKDINILSEILNHGAEVNIYNREGYTPLYIAIITFMQIKFAKLLLRYGSNPNMKNESNENTPLHGAILSNRLDSVELLMSYNVDVHSINKLGHTPLSCINYISDKIATIIISKIVLDLEKDSNLFLLDGFKANIECIDQNDRFKVIRKNCEDELKSIRNIKLNHRYSLSIFLHSDNNNNILIRFLNHPKVEKLSSCISIYKKYIQKTKLSSSIRYKLIHDAIEYSNNISMINSVPINVKYMIMEMLDNKDLKSIIDSVNK.

ANK repeat units follow at residues 5–34 (KLRK…TFSN), 37–66 (ALST…DINK), 68–96 (KSPP…DIEK), 99–128 (LGNS…DPNT), 130–158 (FINY…SLNI), 162–191 (HFKT…SLTI), 195–225 (YNNH…PVNE), 229–258 (LERT…DPNI), 262–291 (CLGT…NVNI), 295–324 (TIDT…NTRL), 326–355 (SRNP…EVNI), 359–389 (EGYT…NPNM), and 394–423 (NENT…DVHS).

This is Putative ankyrin repeat protein FPV024 from Fowlpox virus (strain NVSL) (FPV).